Reading from the N-terminus, the 203-residue chain is Nucleoside triphosphate pyrophosphatase (203 aa).

D78 (proton acceptor) is an active-site residue.

It belongs to the Maf family. It depends on a divalent metal cation as a cofactor.

The protein localises to the cytoplasm. It carries out the reaction a ribonucleoside 5'-triphosphate + H2O = a ribonucleoside 5'-phosphate + diphosphate + H(+). It catalyses the reaction a 2'-deoxyribonucleoside 5'-triphosphate + H2O = a 2'-deoxyribonucleoside 5'-phosphate + diphosphate + H(+). Its function is as follows. Nucleoside triphosphate pyrophosphatase. May have a dual role in cell division arrest and in preventing the incorporation of modified nucleotides into cellular nucleic acids. This is Nucleoside triphosphate pyrophosphatase from Prochlorococcus marinus (strain AS9601).